The primary structure comprises 473 residues: MFETIIGLEVHCQLNTKTKIFCSCPTSFGDKANVHVCPTCLALPGALPVLNKEAVKKAIMFGTAVNATINKKSVFDRKNYFYPDLPKAYQISQFTIPIVEHGELFININGENKRIGITRAHLEEDAGKNTHEEGRSLVDLNRAGTPLLEIVSEPDMRSGDEAVAYLKKLHSILRFINISDANMQEGSFRCDVNVSIRPKGDEKLYTRVEIKNLNSFKFVQKAIEYEVARQIDAWEDGKYSELVVQETRLFDTSNFTTRSMRSKEDSAEYRYFPDPDLLTVEISDEMLEEARKIPELPNEKKERYINELGLKKDDAEVIISSYEHAKFFEDLINAGHEPKLCVTWLNVELNGRLKNGLTIEDSPIDSAKMSDLLSRIEDGTISQKAAKEVLDFIMENIEISVDDVIKKLGLKQVSDDATILAVIDAVISKNEQKVAEYRNGKDKLFGFFVGQVMKEGKGAFNPAKVNELLKQKL.

The protein belongs to the GatB/GatE family. GatB subfamily. As to quaternary structure, heterotrimer of A, B and C subunits.

The enzyme catalyses L-glutamyl-tRNA(Gln) + L-glutamine + ATP + H2O = L-glutaminyl-tRNA(Gln) + L-glutamate + ADP + phosphate + H(+). The catalysed reaction is L-aspartyl-tRNA(Asn) + L-glutamine + ATP + H2O = L-asparaginyl-tRNA(Asn) + L-glutamate + ADP + phosphate + 2 H(+). Functionally, allows the formation of correctly charged Asn-tRNA(Asn) or Gln-tRNA(Gln) through the transamidation of misacylated Asp-tRNA(Asn) or Glu-tRNA(Gln) in organisms which lack either or both of asparaginyl-tRNA or glutaminyl-tRNA synthetases. The reaction takes place in the presence of glutamine and ATP through an activated phospho-Asp-tRNA(Asn) or phospho-Glu-tRNA(Gln). The sequence is that of Aspartyl/glutamyl-tRNA(Asn/Gln) amidotransferase subunit B from Campylobacter hominis (strain ATCC BAA-381 / DSM 21671 / CCUG 45161 / LMG 19568 / NCTC 13146 / CH001A).